The following is an 898-amino-acid chain: Putative disease resistance protein At1g63350 (898 aa).

The stretch at valine 24–asparagine 88 forms a coiled coil. Positions aspartate 137–glycine 440 constitute an NB-ARC domain. Glycine 179 to threonine 186 contacts ATP. 6 LRR repeats span residues valine 516 to methionine 537, glutamate 538 to serine 559, lysine 562 to leucine 584, serine 586 to lysine 608, lysine 609 to histidine 631, and asparagine 632 to glutamate 654.

The protein belongs to the disease resistance NB-LRR family.

Functionally, potential disease resistance protein. The polypeptide is Putative disease resistance protein At1g63350 (Arabidopsis thaliana (Mouse-ear cress)).